The sequence spans 248 residues: Granulin (248 aa).

Belongs to the polyhedrin family.

In terms of biological role, component of the virus occlusion bodies, which are large proteinaceous structures, that protect the virus from the outside environment for extended periods until they are ingested by insect larvae. The sequence is that of Granulin from Zygaenidae (burnets).